Consider the following 188-residue polypeptide: Elongation factor P-like protein (188 aa).

Belongs to the elongation factor P family.

This chain is Elongation factor P-like protein, found in Xanthomonas campestris pv. campestris (strain 8004).